Reading from the N-terminus, the 275-residue chain is Ribosomal RNA small subunit methyltransferase A (275 aa).

Positions 21, 23, 48, 69, 94, and 115 each coordinate S-adenosyl-L-methionine.

It belongs to the class I-like SAM-binding methyltransferase superfamily. rRNA adenine N(6)-methyltransferase family. RsmA subfamily.

The protein localises to the cytoplasm. The catalysed reaction is adenosine(1518)/adenosine(1519) in 16S rRNA + 4 S-adenosyl-L-methionine = N(6)-dimethyladenosine(1518)/N(6)-dimethyladenosine(1519) in 16S rRNA + 4 S-adenosyl-L-homocysteine + 4 H(+). Functionally, specifically dimethylates two adjacent adenosines (A1518 and A1519) in the loop of a conserved hairpin near the 3'-end of 16S rRNA in the 30S particle. May play a critical role in biogenesis of 30S subunits. The polypeptide is Ribosomal RNA small subunit methyltransferase A (Clostridium botulinum (strain Okra / Type B1)).